A 508-amino-acid chain; its full sequence is Protein S-acyltransferase 18 (508 aa).

2 helical membrane-spanning segments follow: residues 17-37 (IVGA…LGFF) and 42-62 (IAVI…IVLF). In terms of domain architecture, DHHC spans 158–208 (SYCSLCDLEVKRSSKHCRTCNRCVEGFDHHCRWLNNCVGKKNYTTFILLMV). The active-site S-palmitoyl cysteine intermediate is cysteine 188. Helical transmembrane passes span 203–223 (FILL…TALA) and 250–270 (WALA…SAAM). Positions 443-468 (VSPGRFSSPRRRFSGSSSSTVPSPKQ) are disordered. Over residues 456-466 (SGSSSSTVPSP) the composition is skewed to low complexity.

Belongs to the DHHC palmitoyltransferase family.

The protein localises to the endoplasmic reticulum membrane. It is found in the cytoplasmic vesicle membrane. It catalyses the reaction L-cysteinyl-[protein] + hexadecanoyl-CoA = S-hexadecanoyl-L-cysteinyl-[protein] + CoA. In terms of biological role, S-acyltransferase involved in protein lipid modification. This chain is Protein S-acyltransferase 18 (PAT18), found in Arabidopsis thaliana (Mouse-ear cress).